The primary structure comprises 313 residues: MLKMESTQQMVSSIINSSFEAAVVAATSTLELMGIQYDYNEVYTRVKSKFDLVMDDSGVKNNLMGKAATIDQALNGKFSSSIRNRNWMTDSKTDARLDEDVNKLRLLLSSKGIDQKMRVLNACFNVKRIPGKSSSVIRCTRLMKEKIERGEVEVDDAFVEEKMEVDTIDWKSRYEQLEKRFESLKQRVNEKYNNWVIKARKDNENMYSLQNVISQQQAHINELQIYNNKLERDLQSKIGSVISSIEWYLRSMELSDDIKSDIEQQLNSIDQINPVNAYDDFESILRNLISDYDRMFIMFKGLLQQSNYIYTYE.

The interval 1-149 (MLKMESTQQM…TRLMKEKIER (149 aa)) is RNA-binding. Residues 150-206 (GEVEVDDAFVEEKMEVDTIDWKSRYEQLEKRFESLKQRVNEKYNNWVIKARKDNENM) form a dimerization region. The stretch at 166–237 (DTIDWKSRYE…NKLERDLQSK (72 aa)) forms a coiled coil. Residues 170-234 (WKSRYEQLEK…IYNNKLERDL (65 aa)) form an interaction with host ZC3H7B region. The interaction with host EIF4G1 stretch occupies residues 208–313 (SLQNVISQQQ…QQSNYIYTYE (106 aa)).

Belongs to the rotavirus NSP3 family. In terms of assembly, homodimer. Interacts (via the coiled-coil region) with host ZC3H7B (via LD motif). Interacts with host EIF4G1.

The protein localises to the host cytoplasm. Functionally, plays an important role in stimulating the translation of viral mRNAs. These mRNAs are capped but not polyadenylated, instead terminating in a conserved sequence 'GACC' at the 3' that is recognized by NSP3, which competes with host PABPC1 for EIF4G1 binding. The interaction between NSP3 and host EIF4G1 stabilizes the EIF4E-EIF4G1 interaction, thereby facilitating the initiation of capped mRNA translation. This chain is Non-structural protein 3, found in Rotavirus A (strain RVA/Human/Indonesia/69M/1980/G8P4[10]) (RV-A).